Here is a 298-residue protein sequence, read N- to C-terminus: MKKSFLIMTDSSTTLDREWAKNNDVMILPLSILRSDHTLIVDDGIESKPERIYEDIDNGYTFQTSCTPYGVLIEAIEQKLQEYEKIIFIGISSGFSSQFNNAKNLEKEYQDKLFVVDTEDFGYSLEHLVYKIKAMLSNNISFGDILKMINKHHDYTSSFLACENITGLVRSGRIPKIIGTMLKLSKVTPIIKAEWKNHRAGMALNIRSAPHKILENINHVFDNQLNNHTIEKVCILQAGLSSERIDELKNDVINHFHVDKEKIVIRSGPPIFLVYVWKGALGIQVIANIPKKHVEKKH.

Residues 5–287 (FLIMTDSSTT…KGALGIQVIA (283 aa)) form the DegV domain. Residues serine 65 and serine 96 each coordinate hexadecanoate.

Its function is as follows. May bind long-chain fatty acids, such as palmitate, and may play a role in lipid transport or fatty acid metabolism. In Ureaplasma parvum serovar 3 (strain ATCC 700970), this protein is DegV domain-containing protein UU535.